The chain runs to 363 residues: 1,2-Dihydrovomilenine reductase (363 aa).

An Enoyl reductase (ER) domain is found at 24–352 (GILSPFKFSR…KGDVRYRFVI (329 aa)). Zn(2+) is bound at residue C51. Residue S53 coordinates NADP(+). Residues D54, E74, C104, C107, C110, and C118 each contribute to the Zn(2+) site. Positions 193, 195, 196, 215, 216, 217, 220, 221, 278, 280, 302, and 349 each coordinate NADP(+).

This sequence belongs to the zinc-containing alcohol dehydrogenase family. Class-P subfamily. As to quaternary structure, homodimer. The cofactor is Zn(2+). In terms of tissue distribution, mainly expressed in mature roots and, to a lower extent, in stems and leaves.

Its subcellular location is the cytoplasm. It catalyses the reaction 17-O-acetylnorajmaline + NADP(+) = (2R)-1,2-dihydrovomilenine + NADPH + 2 H(+). The catalysed reaction is (20S)-19,20-dihydrovomilenine + NADP(+) = vomilenine + NADPH + H(+). It participates in alkaloid biosynthesis; ajmaline biosynthesis. Its function is as follows. Alcohol dehydrogenase involved in the biosynthesis of ajmaline-type monoterpenoid indole alkaloids (MIAs) natural products, important plant-derived pharmaceuticals used in the therapy of heart disorders. Catalyzes the conversion of 1,2-dihydrovomilenine to 17-O-acetylnorajmaline, an intermediate chemical in the biosynthesis of ajmaline. Also able, with a lower efficiency, to convert vomilenine into 19,20-dihydrovomilenine. The polypeptide is 1,2-Dihydrovomilenine reductase (Rauvolfia serpentina (Serpentine wood)).